Reading from the N-terminus, the 583-residue chain is uncharacterized protein (583 aa).

A nucleoside 3',5'-cyclic phosphate is bound at residue 24–140 (ILADIDDEQL…SAMLRAMARM (117 aa)). The 161-residue stretch at 309 to 469 (LVMAGGGARG…LNNLPANVMC (161 aa)) folds into the PNPLA domain. The GXGXXG signature appears at 313-318 (GGGARG). The GXSXG signature appears at 340-344 (GTSSG). S342 serves as the catalytic Nucleophile. The active-site Proton acceptor is the D456. The DGA/G signature appears at 456–458 (DGG).

Belongs to the NTE family.

This is an uncharacterized protein from Mycobacterium bovis (strain ATCC BAA-935 / AF2122/97).